A 357-amino-acid chain; its full sequence is Trans-enoyl reductase resD (357 aa).

Y211 is an NADP(+) binding site.

This sequence belongs to the zinc-containing alcohol dehydrogenase family.

Its pathway is antifungal biosynthesis. Functionally, trans-enoyl reductase; part of the gene cluster that mediates the biosynthesis of the tetrahydropyranyl antifungal agent restricticin that acts as an inhibitor of CYP51 and blocks the ergosterol biosynthesis. The highly reducing polyketide synthase resH, the short chain dehydrogenase resG, the cyclase resF, the FAD-dependent monooxygenase resA and the enoylreductase resD are required to generate the first stable intermediate desmethylrestrictinol. ResH with resD biosynthesize the first polyketide chain intermediate that is reduced by resG, followed by epoxidation by resA before 6-endo cyclization via epoxide opening by resF leads to desmethylrestrictinol. The methyltransferase resE then catalyzes the C4 O-methylation of desmethylrestrictinol to produce restrictinol, and the nonribosomal peptide synthetase resC catalyzes the C3 esterification of restrictinol with glycine that leads to restricticin. The protein is Trans-enoyl reductase resD of Aspergillus sclerotiorum.